The sequence spans 188 residues: uncharacterized protein (188 aa).

This is an uncharacterized protein from Acidianus convivator (ABV).